Consider the following 429-residue polypeptide: Ribosomal RNA small subunit methyltransferase B (429 aa).

S-adenosyl-L-methionine is bound by residues 254–260 (CAAPGGK), D277, D303, and D322. Residue C375 is the Nucleophile of the active site.

This sequence belongs to the class I-like SAM-binding methyltransferase superfamily. RsmB/NOP family.

It is found in the cytoplasm. The enzyme catalyses cytidine(967) in 16S rRNA + S-adenosyl-L-methionine = 5-methylcytidine(967) in 16S rRNA + S-adenosyl-L-homocysteine + H(+). Its function is as follows. Specifically methylates the cytosine at position 967 (m5C967) of 16S rRNA. The sequence is that of Ribosomal RNA small subunit methyltransferase B from Shigella flexneri.